The following is a 458-amino-acid chain: Probable alpha-L-glutamate ligase (458 aa).

A unknown region spans residues 1–162 (MSDNKFIIGS…YGVKTAKKSG (162 aa)). Residues 163–458 (LKIGLLASNP…IEKKLGWKAD (296 aa)) form an alpha-L-glutamate ligase region. Residues 267-450 (LQLLQKNNLD…IAGAMIESIE (184 aa)) form the ATP-grasp domain. Residues lysine 304, 341–342 (EF), aspartate 350, and 374–376 (RAN) contribute to the ATP site. Mg(2+)-binding residues include aspartate 411, glutamate 423, and asparagine 425. Mn(2+) is bound by residues aspartate 411, glutamate 423, and asparagine 425.

This sequence in the C-terminal section; belongs to the RimK family. It depends on Mg(2+) as a cofactor. The cofactor is Mn(2+).

The protein is Probable alpha-L-glutamate ligase of Shewanella pealeana (strain ATCC 700345 / ANG-SQ1).